The following is a 444-amino-acid chain: Exodeoxyribonuclease 7 large subunit (444 aa).

It belongs to the XseA family. As to quaternary structure, heterooligomer composed of large and small subunits.

The protein resides in the cytoplasm. The enzyme catalyses Exonucleolytic cleavage in either 5'- to 3'- or 3'- to 5'-direction to yield nucleoside 5'-phosphates.. In terms of biological role, bidirectionally degrades single-stranded DNA into large acid-insoluble oligonucleotides, which are then degraded further into small acid-soluble oligonucleotides. The sequence is that of Exodeoxyribonuclease 7 large subunit from Hahella chejuensis (strain KCTC 2396).